Here is a 434-residue protein sequence, read N- to C-terminus: Nicotinate phosphoribosyltransferase (434 aa).

At His-242 the chain carries Phosphohistidine; by autocatalysis.

Belongs to the NAPRTase family. Post-translationally, transiently phosphorylated on a His residue during the reaction cycle. Phosphorylation strongly increases the affinity for substrates and increases the rate of nicotinate D-ribonucleotide production. Dephosphorylation regenerates the low-affinity form of the enzyme, leading to product release.

It catalyses the reaction nicotinate + 5-phospho-alpha-D-ribose 1-diphosphate + ATP + H2O = nicotinate beta-D-ribonucleotide + ADP + phosphate + diphosphate. It functions in the pathway cofactor biosynthesis; NAD(+) biosynthesis; nicotinate D-ribonucleotide from nicotinate: step 1/1. In terms of biological role, catalyzes the synthesis of beta-nicotinate D-ribonucleotide from nicotinate and 5-phospho-D-ribose 1-phosphate at the expense of ATP. The polypeptide is Nicotinate phosphoribosyltransferase (Brucella anthropi (strain ATCC 49188 / DSM 6882 / CCUG 24695 / JCM 21032 / LMG 3331 / NBRC 15819 / NCTC 12168 / Alc 37) (Ochrobactrum anthropi)).